Reading from the N-terminus, the 335-residue chain is MKEILNALYHQKDLNDGEVKKLFTLIINEKVSPAQLGAVLCALKIKGESFKEISVAATTLLEHAPKPFDSGLDLIDNCGTGGDGLKTINISTIAALIASSMGLSMAKHGSRSVSSHSGSADLLENLGVNIEMNPTQLENCFKQTHFGFLFAPLYHQSFKKSAPLRKELFTKTIFNCLGPLINPLRPKIQLLGVYEKSLCKTMALALKALGVKRAMVVNGGGTDEIVLHDTTHACELKNNGILEYDLSAKDFDLPPYDLKELQIKNAQESVQACLDILENKGKDSHTMVVVANVASLLYLSHKAKDLKEGVGMTLEHLKTKVPYTHLQKIIRLSHA.

Residues G79, 82–83 (GD), T87, 89–92 (NIST), 107–115 (KHGSRSVSS), and S119 each bind 5-phospho-alpha-D-ribose 1-diphosphate. G79 serves as a coordination point for anthranilate. Mg(2+) is bound at residue S91. R165 contacts anthranilate. Positions 223 and 224 each coordinate Mg(2+).

Belongs to the anthranilate phosphoribosyltransferase family. As to quaternary structure, homodimer. Mg(2+) is required as a cofactor.

It catalyses the reaction N-(5-phospho-beta-D-ribosyl)anthranilate + diphosphate = 5-phospho-alpha-D-ribose 1-diphosphate + anthranilate. It participates in amino-acid biosynthesis; L-tryptophan biosynthesis; L-tryptophan from chorismate: step 2/5. Functionally, catalyzes the transfer of the phosphoribosyl group of 5-phosphorylribose-1-pyrophosphate (PRPP) to anthranilate to yield N-(5'-phosphoribosyl)-anthranilate (PRA). The protein is Anthranilate phosphoribosyltransferase of Helicobacter pylori (strain Shi470).